The following is a 617-amino-acid chain: MSGYDRMLRTLGGNLMEFIENLDALHSYLALSYQEMNAPSFRVERGADGKMFLHYYSDRSGLCHIVPGIIEAVAKDFFDIDVIMDILDMNEEVERTGKKEHVVFLIVQKAHRKMRKTKPKRLQDSQGMERDQEALQAAFLKMKEKYLNVSACPVKKSHWDVVRSIVMFGKGHLMNTFEPIYPERLWIEEKTFCNAFPFHIVFDESLQVKQARVNIQKYVPGLQTQNIQLDEYFSIIHPQVTFNIFSIRRFINSQFVLKTRREMMPVAWQSRTTLKLQGQMIWMESMWCMVYLCSPKLRSLQELEELNMHLSDIAPNDTTRDLILLNQQRLAEIELSNQLERKKEELQVLSKHLAIEKKKTETLLYAMLPKHVANQLREGKKVAAGEFKSCTILFSDVVTFTNICTACEPIQIVNVLNSMYSKFDRLTSVHAVYKVETIGDAYMVVGGVPVPIGNHAQRVANFALGMRISAKEVTNPVTGEPIQLRVGIHTGPVLADVVGDKMPRYCLFGDTVNTASRMESHGLPNKVHLSPTAYRALKNQGFKIIERGEIEVKGKGRMTTYFLIQNLNATEDEIMGRSKTPVDHKGSTQKASLPTTKLQGSVQPSCPEHSSLASWLL.

Residue His26 participates in heme binding. Positions 391–519 (TILFSDVVTF…DTVNTASRME (129 aa)) constitute a Guanylate cyclase domain. The span at 577 to 586 (RSKTPVDHKG) shows a compositional bias: basic and acidic residues. The interval 577–605 (RSKTPVDHKGSTQKASLPTTKLQGSVQPS) is disordered. Residues 588 to 604 (TQKASLPTTKLQGSVQP) are compositionally biased toward polar residues.

Belongs to the adenylyl cyclase class-4/guanylyl cyclase family. Heterodimer of an alpha and a beta chain. The cofactor is heme. In terms of tissue distribution, expressed in gastric signet ring cell carcinoma, but not in the normal stomach.

It is found in the cytoplasm. The catalysed reaction is GTP = 3',5'-cyclic GMP + diphosphate. With respect to regulation, activated by nitric oxide in the presence of magnesium or manganese ions. This is Guanylate cyclase soluble subunit beta-2 (GUCY1B2) from Homo sapiens (Human).